Consider the following 99-residue polypeptide: Small ribosomal subunit protein bS20 (99 aa).

This sequence belongs to the bacterial ribosomal protein bS20 family.

Binds directly to 16S ribosomal RNA. This is Small ribosomal subunit protein bS20 from Caldicellulosiruptor saccharolyticus (strain ATCC 43494 / DSM 8903 / Tp8T 6331).